The following is a 109-amino-acid chain: Spermidine export protein MdtI (109 aa).

Helical transmembrane passes span 6 to 26 (WVHA…NVFL), 36 to 56 (IFGL…SQAV), 64 to 84 (AYAL…WILF), and 88 to 108 (LNRK…MVKL).

This sequence belongs to the drug/metabolite transporter (DMT) superfamily. Small multidrug resistance (SMR) (TC 2.A.7.1) family. MdtI subfamily. Forms a complex with MdtJ.

Its subcellular location is the cell inner membrane. Catalyzes the excretion of spermidine. The sequence is that of Spermidine export protein MdtI from Shigella dysenteriae serotype 1 (strain Sd197).